A 175-amino-acid chain; its full sequence is uncharacterized protein (175 aa).

A DNL-type zinc finger spans residues 71–166 (QPKPTYNVSF…KPPQFKIRPA (96 aa)). Positions 82, 85, 107, and 110 each coordinate Zn(2+).

This is an uncharacterized protein from Schizosaccharomyces pombe (strain 972 / ATCC 24843) (Fission yeast).